The primary structure comprises 423 residues: Tyrosine--tRNA ligase (423 aa).

Y35 is an L-tyrosine binding site. Residues 40 to 49 carry the 'HIGH' region motif; sequence PTAPSLHAGH. The L-tyrosine site is built by Y170 and Q174. The 'KMSKS' region signature appears at 230–234; it reads KFGKS. An ATP-binding site is contributed by K233. In terms of domain architecture, S4 RNA-binding spans 355-412; sequence DLITDLLVATGLSASKGAARRTIAEGGVSVNNVKIDSDEWTPQASDFLHGRWLVLRRG.

This sequence belongs to the class-I aminoacyl-tRNA synthetase family. TyrS type 1 subfamily. Homodimer.

It localises to the cytoplasm. The enzyme catalyses tRNA(Tyr) + L-tyrosine + ATP = L-tyrosyl-tRNA(Tyr) + AMP + diphosphate + H(+). Functionally, catalyzes the attachment of tyrosine to tRNA(Tyr) in a two-step reaction: tyrosine is first activated by ATP to form Tyr-AMP and then transferred to the acceptor end of tRNA(Tyr). This chain is Tyrosine--tRNA ligase, found in Mycobacterium sp. (strain JLS).